A 706-amino-acid polypeptide reads, in one-letter code: Envelope glycoprotein H (706 aa).

The N-terminal stretch at 1-18 is a signal peptide; sequence MQLLCVFCLVLLWEVGAA. Over 19–682 the chain is Virion surface; it reads SLSEVKLHLD…LYEERAHVVL (664 aa). N-linked (GlcNAc...) asparagine; by host glycosylation is present at N60. The interval 165–229 is interaction with gL; that stretch reads DKFQYTGAMT…QSGDYSLVIV (65 aa). C278 and C335 are disulfide-bonded. Residue N435 is glycosylated (N-linked (GlcNAc...) asparagine; by host). Disulfide bonds link C454/C478 and C534/C587. N549 and N604 each carry an N-linked (GlcNAc...) asparagine; by host glycan. A disulfide bond links C612 and C615. N664 carries an N-linked (GlcNAc...) asparagine; by host glycan. The helical transmembrane segment at 683-703 threads the bilayer; sequence AIILYFIAFALGIFLVHKIVM. The Intravirion segment spans residues 704-706; it reads FFL.

It belongs to the herpesviridae glycoprotein H family. As to quaternary structure, interacts with glycoprotein L (gL); this interaction is necessary for the correct processing and cell surface expression of gH. The heterodimer gH/gL seems to interact with gB trimers during fusion. The heterodimer gH/gL interacts with host EPHA2 to facilitate virus internalization and fusion. Interacts with glycoprotein 42/BZLF2. In terms of processing, N-glycosylated, O-glycosylated, and sialylated.

It localises to the virion membrane. Its subcellular location is the host cell membrane. The protein resides in the host endosome membrane. The heterodimer glycoprotein H-glycoprotein L is required for the fusion of viral and plasma membranes leading to virus entry into the host cell. Following initial binding to host receptor, membrane fusion is mediated by the fusion machinery composed of gB and the heterodimer gH/gL. May also be involved in the fusion between the virion envelope and the outer nuclear membrane during virion morphogenesis. The heterodimer gH/gL targets also host EPHA2 to promote viral entry. This chain is Envelope glycoprotein H, found in Homo sapiens (Human).